Here is a 526-residue protein sequence, read N- to C-terminus: Glucose-6-phosphate isomerase (526 aa).

Glutamate 320 serves as the catalytic Proton donor. Residues histidine 349 and lysine 453 contribute to the active site.

It belongs to the GPI family.

Its subcellular location is the cytoplasm. The catalysed reaction is alpha-D-glucose 6-phosphate = beta-D-fructose 6-phosphate. Its pathway is carbohydrate biosynthesis; gluconeogenesis. It functions in the pathway carbohydrate degradation; glycolysis; D-glyceraldehyde 3-phosphate and glycerone phosphate from D-glucose: step 2/4. Functionally, catalyzes the reversible isomerization of glucose-6-phosphate to fructose-6-phosphate. This Rippkaea orientalis (strain PCC 8801 / RF-1) (Cyanothece sp. (strain PCC 8801)) protein is Glucose-6-phosphate isomerase.